Here is an 835-residue protein sequence, read N- to C-terminus: MRWSFLTVLLWLVSLTGAENGFNGWLRYAPVQCDKRCQRALPSSIVTLNSTDSGPIGTASQELQAGLENIVGKQLSIKRSSCGSRSSILVATLEQYRQACNRSSEVPSLGIDGFWLRAYGDTVQIVGENERGALYGAFEYLSLLAQGNFSHVDYTTSAHAPVRWVNQWDNMDGSIERGYAGPSIFFEDGHIVEDLSRVKQYARLLASIRINGVIVNNVNANATLLTSQNMDGLARIANVFRPYGIQIGISLNFASPDTLGGLGTYDPLDPSVISWWANITDSLYDRVPDMAGYLVKASSEGQPGPDTYNRTLAEGANVFAKALQPHGGILMFRTFVYDHHINESIWTNDRANAQVDFFKELDGQFEDNIKYGPIDFQVREPVSPLFANLYKTNMAIELQVTQEYLGQQDHLVYLSPLWKELLDFDLRVDHQPSLVRDIVSGQRFDRQLGGWAAVVNVGTNTTWLGSHLAMSNLYAYGRLAWSPTDDSQGILQDWIRLTFGRDQNVLDAITDMSMASWPAYENYTGNLGIQTLTDILYTHYGPNPASQDNNGWGQWTRADHDTIGMDRTVKNGTGNAGQYPAEIAQVYEDLDSTPDDLLLWFHHVPYTHRLHSGKTVIQHFYDAHYDGAETAHRFLSQWESLKGRIDQQRYNEVLSRLVYQAGHSLVWRDAINNFYWNMSGISDEKNRLGHHPWRVEAESMTLDGYEPYTVSPFETASNYKAVVTTSNSTTGTAQTKLQFPSGTYDLGVNYYDMYGGKSEWTVYVNDRVVGQWEGNSENTLGHTPSIYIDGHSATRITFRGVEIENGDQLKIVGVPDGVEPAPLDYVVLLPPDVVD.

The N-terminal stretch at Met1–Ala18 is a signal peptide. Asn49, Asn101, Asn148, Asn221, Asn278, Asn309, Asn342, Asn460, Asn522, Asn571, Asn677, and Asn727 each carry an N-linked (GlcNAc...) asparagine glycan.

It belongs to the glycosyl hydrolase 67 family.

The protein localises to the secreted. The enzyme catalyses an alpha-D-glucuronoside + H2O = D-glucuronate + an alcohol. In terms of biological role, alpha-glucuronidase involved in the hydrolysis of xylan, a major structural heterogeneous polysaccharide found in plant biomass representing the second most abundant polysaccharide in the biosphere, after cellulose. Releases 4-O-methylglucuronic acid from xylan. This chain is Probable alpha-glucuronidase A (aguA), found in Aspergillus oryzae (strain ATCC 42149 / RIB 40) (Yellow koji mold).